Reading from the N-terminus, the 197-residue chain is uncharacterized protein (197 aa).

Transmembrane regions (helical) follow at residues 9 to 29, 67 to 87, 104 to 124, and 160 to 180; these read IYILQTLGSLYLLIVLLRFIL, LASLVLAILIQLVLMILILML, IIAVTSLFLKVFFFALIISVI, and GLDLSPIFAFLALKLIDMLVI.

This sequence belongs to the YggT family.

It is found in the cell membrane. This is an uncharacterized protein from Pseudomonas aeruginosa (strain ATCC 15692 / DSM 22644 / CIP 104116 / JCM 14847 / LMG 12228 / 1C / PRS 101 / PAO1).